A 575-amino-acid chain; its full sequence is Transcription factor COE2 (575 aa).

Positions 62–65 are interaction with DNA; sequence RKSN. The C5-type zinc-finger motif lies at 150–169; that stretch reads CRVLLTHEVMCSRCCEKKSC. Interaction with DNA stretches follow at residues 196 to 203 and 235 to 238; these read NCLKTAGN and NNSK. In terms of domain architecture, IPT/TIG spans 253 to 336; the sequence is PCIKAISPSE…KGAPGRFIYT (84 aa). The span at 441–453 shows a compositional bias: polar residues; sequence STQGNNQGYIRNT. Positions 441–479 are disordered; the sequence is STQGNNQGYIRNTSSISPRGYSSSSTPQQSNYSTSSNSM. Positions 454 to 479 are enriched in low complexity; sequence SSISPRGYSSSSTPQQSNYSTSSNSM.

This sequence belongs to the COE family. As to quaternary structure, forms either a homodimer or a heterodimer with a related family member. Interacts with SIX1.

It localises to the nucleus. Functionally, transcription factor that, in osteoblasts, activates the decoy receptor for RANKL, TNFRSF11B, which in turn regulates osteoclast differentiation. Acts in synergy with the Wnt-responsive LEF1/CTNNB1 pathway. Recognizes variations of the palindromic sequence 5'-ATTCCCNNGGGAATT-3'. The protein is Transcription factor COE2 (EBF2) of Bos taurus (Bovine).